Here is a 712-residue protein sequence, read N- to C-terminus: UvrABC system protein B (712 aa).

The Helicase ATP-binding domain occupies 35-421 (RRVQAGEKDV…SDGAVEQIIR (387 aa)). 48–55 (GATGTGKS) lines the ATP pocket. The short motif at 101–124 (YYDYYQPEAYVPQSDTYIEKDSSI) is the Beta-hairpin element. The Helicase C-terminal domain occupies 438–604 (QIDDLVHEIR…PLRKKINDIV (167 aa)). The tract at residues 625–655 (TKEGKGAKAPVPALGGQKTGGAKAARGRAKE) is disordered. One can recognise a UVR domain in the interval 667–702 (AEQIEDLTTRMRAAAADLQFEIAARLRDEVSEMKKE).

Belongs to the UvrB family. In terms of assembly, forms a heterotetramer with UvrA during the search for lesions. Interacts with UvrC in an incision complex.

The protein resides in the cytoplasm. In terms of biological role, the UvrABC repair system catalyzes the recognition and processing of DNA lesions. A damage recognition complex composed of 2 UvrA and 2 UvrB subunits scans DNA for abnormalities. Upon binding of the UvrA(2)B(2) complex to a putative damaged site, the DNA wraps around one UvrB monomer. DNA wrap is dependent on ATP binding by UvrB and probably causes local melting of the DNA helix, facilitating insertion of UvrB beta-hairpin between the DNA strands. Then UvrB probes one DNA strand for the presence of a lesion. If a lesion is found the UvrA subunits dissociate and the UvrB-DNA preincision complex is formed. This complex is subsequently bound by UvrC and the second UvrB is released. If no lesion is found, the DNA wraps around the other UvrB subunit that will check the other stand for damage. In Streptomyces coelicolor (strain ATCC BAA-471 / A3(2) / M145), this protein is UvrABC system protein B.